The primary structure comprises 174 residues: Protein C2-DOMAIN ABA-RELATED 6 (174 aa).

The C2 domain maps to 1 to 115; the sequence is MEKTEEEVEM…HKLGLKELPH (115 aa). Residues arginine 30, aspartate 31, aspartate 36, aspartate 82, lysine 83, aspartate 84, and aspartate 90 each contribute to the Ca(2+) site.

Belongs to the plant CAR protein family. As to quaternary structure, binds to PYR/PYL/RCAR abscisic acid intracellular receptors in an ABA-independent manner, both at the plasma membrane and in the nucleus. Subunit of a complex made of CAR6, PHOT1 and RPT3/NPH3. Interacts directly with RPT3/NPH3.

The protein resides in the cell membrane. The protein localises to the nucleus. Stimulates the GTPase/ATPase activities of Obg-like ATPases. Mediates the transient calcium-dependent interaction of PYR/PYL/RCAR abscisic acid (ABA) receptors with the plasma membrane and thus regulates ABA sensitivity. Prevents hypocotyl bending as well as gravitropic response under blue light conditions. The sequence is that of Protein C2-DOMAIN ABA-RELATED 6 from Arabidopsis thaliana (Mouse-ear cress).